The following is a 588-amino-acid chain: MSDKKIKGLEWQEKPLSDNERLKTDSNFLRGTILDDLKDDLTGGFKGDNFQLIRFHGMYEQDDRDIRAERLEEKLEPLKFMLLRCRLPGGIIKPYQWIEIDKFAREHTRYQSIRLTNRQTFQYHGVPKGKLQPMHRLLHSIGLDSIATAADMNRNVLCTSNPIESELHQQAYEFAKKISEHLLPRSRGYLDVWVDGKKVESSDDLLKIEDEPILGKTYLPRKFKTAVAIPPLNDVDVYANDLNFIAIQDENGQLCGFNVLVGGGLSFEHGNTKTYPNVAYSLGFVPLEHTLAAAEGVVKTQRDFGNRSDRKNARVRYTVQNMTLDGFRAEVERCMNIKFEPTRPYEFTERGDRIGWVKGIDNNWHLTLFIESVRITDKPEKPLMTGVLELAKVHKGDFRITANQNLIVANVAEQDKAQIEAIARQYGLIQEISKLRENAMSCVSLPTCPLAMAEAERVLPDFISELDKVLSKHNVADESIITRITGCPNGCGRAMLAEIGLVGKAIGRYNLHIGGDRAGLRISRLYKENITLQEIVNEIDQLVARWATERQTNEAFGDFVIRSNIIAPVVNAHIDFWDATKIIPTTII.

[4Fe-4S] cluster is bound by residues Cys442, Cys448, Cys487, and Cys491. Cys491 provides a ligand contact to siroheme.

The protein belongs to the nitrite and sulfite reductase 4Fe-4S domain family. Alpha(8)-beta(8). The alpha component is a flavoprotein, the beta component is a hemoprotein. Siroheme serves as cofactor. It depends on [4Fe-4S] cluster as a cofactor.

The enzyme catalyses hydrogen sulfide + 3 NADP(+) + 3 H2O = sulfite + 3 NADPH + 4 H(+). Its pathway is sulfur metabolism; hydrogen sulfide biosynthesis; hydrogen sulfide from sulfite (NADPH route): step 1/1. Its function is as follows. Component of the sulfite reductase complex that catalyzes the 6-electron reduction of sulfite to sulfide. This is one of several activities required for the biosynthesis of L-cysteine from sulfate. The polypeptide is Sulfite reductase [NADPH] hemoprotein beta-component (Actinobacillus pleuropneumoniae serotype 5b (strain L20)).